The following is a 417-amino-acid chain: Serine hydroxymethyltransferase (417 aa).

(6S)-5,6,7,8-tetrahydrofolate is bound by residues Leu-121 and 125–127; that span reads GHL. At Lys-229 the chain carries N6-(pyridoxal phosphate)lysine. 355–357 serves as a coordination point for (6S)-5,6,7,8-tetrahydrofolate; that stretch reads SPF.

The protein belongs to the SHMT family. As to quaternary structure, homodimer. Requires pyridoxal 5'-phosphate as cofactor.

It localises to the cytoplasm. It catalyses the reaction (6R)-5,10-methylene-5,6,7,8-tetrahydrofolate + glycine + H2O = (6S)-5,6,7,8-tetrahydrofolate + L-serine. It functions in the pathway one-carbon metabolism; tetrahydrofolate interconversion. It participates in amino-acid biosynthesis; glycine biosynthesis; glycine from L-serine: step 1/1. In terms of biological role, catalyzes the reversible interconversion of serine and glycine with tetrahydrofolate (THF) serving as the one-carbon carrier. This reaction serves as the major source of one-carbon groups required for the biosynthesis of purines, thymidylate, methionine, and other important biomolecules. Also exhibits THF-independent aldolase activity toward beta-hydroxyamino acids, producing glycine and aldehydes, via a retro-aldol mechanism. In Salmonella arizonae (strain ATCC BAA-731 / CDC346-86 / RSK2980), this protein is Serine hydroxymethyltransferase.